A 447-amino-acid chain; its full sequence is Phosphoglucosamine mutase (447 aa).

Ser102 serves as the catalytic Phosphoserine intermediate. Mg(2+) is bound by residues Ser102, Asp241, Asp243, and Asp245. Position 102 is a phosphoserine (Ser102).

The protein belongs to the phosphohexose mutase family. The cofactor is Mg(2+). Post-translationally, activated by phosphorylation.

The enzyme catalyses alpha-D-glucosamine 1-phosphate = D-glucosamine 6-phosphate. Catalyzes the conversion of glucosamine-6-phosphate to glucosamine-1-phosphate. This Symbiobacterium thermophilum (strain DSM 24528 / JCM 14929 / IAM 14863 / T) protein is Phosphoglucosamine mutase.